Reading from the N-terminus, the 447-residue chain is Tubulin beta-1 chain (447 aa).

The GTP site is built by glutamine 11, glutamate 69, serine 138, glycine 142, threonine 143, glycine 144, asparagine 204, and asparagine 226. Mg(2+) is bound at residue glutamate 69.

This sequence belongs to the tubulin family. Dimer of alpha and beta chains. A typical microtubule is a hollow water-filled tube with an outer diameter of 25 nm and an inner diameter of 15 nM. Alpha-beta heterodimers associate head-to-tail to form protofilaments running lengthwise along the microtubule wall with the beta-tubulin subunit facing the microtubule plus end conferring a structural polarity. Microtubules usually have 13 protofilaments but different protofilament numbers can be found in some organisms and specialized cells. Requires Mg(2+) as cofactor.

The protein localises to the cytoplasm. It localises to the cytoskeleton. Functionally, tubulin is the major constituent of microtubules, a cylinder consisting of laterally associated linear protofilaments composed of alpha- and beta-tubulin heterodimers. Microtubules grow by the addition of GTP-tubulin dimers to the microtubule end, where a stabilizing cap forms. Below the cap, tubulin dimers are in GDP-bound state, owing to GTPase activity of alpha-tubulin. In Geotrichum candidum (Oospora lactis), this protein is Tubulin beta-1 chain.